The chain runs to 421 residues: Threonine--tRNA ligase editing subunit (421 aa).

Belongs to the class-II aminoacyl-tRNA synthetase family. Archaea-specific ThrRS editing domain subfamily. Probably interacts with its catalytic subunit.

The protein resides in the cytoplasm. Functionally, freestanding tRNA editing subunit of threonine--tRNA ligase, the catalytic subunit is probably AC Q9YDW0. Deacylates (edits) mischarged L-seryl-tRNA(Thr) in trans; has no activity on correctly charged L-threonyl-tRNA(Thr). Probably does not aminoacylate tRNA(Thr). Deacylates correctly charged glycyl-tRNA(Gly), but not glycyl-tRNA(Gly)(2'-dA76) (the terminal 2'-OH of tRNA adenine 76 has been dehydroxylated) nor the 2'-fluoro tRNA derivative, strongly suggesting the editing function is catalyzed by the 2'-OH of A76 of tRNA(Thr). This Aeropyrum pernix (strain ATCC 700893 / DSM 11879 / JCM 9820 / NBRC 100138 / K1) protein is Threonine--tRNA ligase editing subunit (thrS2).